Here is a 437-residue protein sequence, read N- to C-terminus: 5-hydroxytryptamine receptor 3B (437 aa).

The first 21 residues, 1–21 (MILLWSCLLVAVVGILGTATP), serve as a signal peptide directing secretion. Residues 22 to 238 (QPGNSSLHRL…VVIRRCPLAY (217 aa)) are Extracellular-facing. N-linked (GlcNAc...) asparagine glycans are attached at residues Asn-25, Asn-92, and Asn-134. Cysteines 151 and 165 form a disulfide. Residues 239 to 259 (VVSLLIPSIFLMLVDLGSFYL) form a helical membrane-spanning segment. Residues 260–264 (PPNCR) are Cytoplasmic-facing. A helical transmembrane segment spans residues 265-282 (ARIVFKTNVLVGYTVFRV). N-linked (GlcNAc...) asparagine glycosylation is present at Asn-283. Over 283 to 292 (NMSDEVPRSA) the chain is Extracellular. A helical membrane pass occupies residues 293-313 (GCTPLIGVFFTVCMALLVLSL). Residues 314-410 (SKSILLIKFL…WLAILYRFDQ (97 aa)) are Cytoplasmic-facing. An HA-stretch; determines single-channel conductance in 5-HT3 receptors region spans residues 377–409 (FWFQFRSINNSLRTRDQIHQKEVEWLAILYRFD). Residues 411 to 431 (LLFRIYLAVLGLYTVTLCSLW) form a helical membrane-spanning segment. Over 432–437 (ALWSRM) the chain is Extracellular.

The protein belongs to the ligand-gated ion channel (TC 1.A.9) family. 5-hydroxytryptamine receptor (TC 1.A.9.2) subfamily. HTR3B sub-subfamily. As to quaternary structure, forms homopentameric as well as heteropentameric serotonin-activated cation-selective channel complexes with HTR3A. The homomeric complex is not functional. Heteropentameric complexes display properties which resemble that of neuronal serotonin-activated channels in vivo. N-glycosylation is required for membrane localization.

Its subcellular location is the postsynaptic cell membrane. It localises to the cell membrane. The enzyme catalyses Na(+)(in) = Na(+)(out). It carries out the reaction K(+)(in) = K(+)(out). The catalysed reaction is Ca(2+)(in) = Ca(2+)(out). Its function is as follows. Forms serotonin (5-hydroxytryptamine/5-HT3)-activated cation-selective channel complexes, which when activated cause fast, depolarizing responses in neurons. The chain is 5-hydroxytryptamine receptor 3B from Mus musculus (Mouse).